We begin with the raw amino-acid sequence, 119 residues long: uncharacterized protein (119 aa).

The signal sequence occupies residues 1-18; the sequence is MPAVFMLASSSALQCGRG. Residues 23–100 are disordered; it reads PRTEVGAGHS…MFPGPLRGPA (78 aa). Residues 43-71 show a composition bias toward polar residues; the sequence is GNQTSVIPATSRQAALGTSWTQRRTQPLQ. N-linked (GlcNAc...) asparagine glycosylation is present at asparagine 44.

It localises to the secreted. This is an uncharacterized protein from Homo sapiens (Human).